The sequence spans 355 residues: Histidinol-phosphate aminotransferase (355 aa).

Lys218 is subject to N6-(pyridoxal phosphate)lysine.

The protein belongs to the class-II pyridoxal-phosphate-dependent aminotransferase family. Histidinol-phosphate aminotransferase subfamily. Homodimer. It depends on pyridoxal 5'-phosphate as a cofactor.

The catalysed reaction is L-histidinol phosphate + 2-oxoglutarate = 3-(imidazol-4-yl)-2-oxopropyl phosphate + L-glutamate. It participates in amino-acid biosynthesis; L-histidine biosynthesis; L-histidine from 5-phospho-alpha-D-ribose 1-diphosphate: step 7/9. The chain is Histidinol-phosphate aminotransferase from Chlorobaculum parvum (strain DSM 263 / NCIMB 8327) (Chlorobium vibrioforme subsp. thiosulfatophilum).